A 267-amino-acid polypeptide reads, in one-letter code: Dihydropteroate synthase (267 aa).

The 251-residue stretch at 1–251 (MTKTKIMGIL…NVELNAKLAK (251 aa)) folds into the Pterin-binding domain. N11 contributes to the Mg(2+) binding site. (7,8-dihydropterin-6-yl)methyl diphosphate contacts are provided by residues T51, D84, N103, D167, K203, and 239–241 (RVH).

The protein belongs to the DHPS family. Homodimer. Requires Mg(2+) as cofactor.

It carries out the reaction (7,8-dihydropterin-6-yl)methyl diphosphate + 4-aminobenzoate = 7,8-dihydropteroate + diphosphate. It participates in cofactor biosynthesis; tetrahydrofolate biosynthesis; 7,8-dihydrofolate from 2-amino-4-hydroxy-6-hydroxymethyl-7,8-dihydropteridine diphosphate and 4-aminobenzoate: step 1/2. Catalyzes the condensation of para-aminobenzoate (pABA) with 6-hydroxymethyl-7,8-dihydropterin diphosphate (DHPt-PP) to form 7,8-dihydropteroate (H2Pte), the immediate precursor of folate derivatives. The protein is Dihydropteroate synthase (folP) of Staphylococcus aureus (strain MSSA476).